The chain runs to 877 residues: Probable alpha/beta-glucosidase agdC (877 aa).

The N-terminal stretch at 1 to 14 (MLGSLLLLAPLAGA) is a signal peptide. Asn171, Asn293, and Asn373 each carry an N-linked (GlcNAc...) asparagine glycan. Asp422 functions as the Nucleophile in the catalytic mechanism. Glu425 is a catalytic residue. The tract at residues 432–476 (DPCTDPERYSSENNLPPAPPPVRSSSPRPLPGFPADFQPSSASRS) is disordered. Residues 447–463 (PPAPPPVRSSSPRPLPG) are compositionally biased toward pro residues. An N-linked (GlcNAc...) asparagine glycan is attached at Asn508. Catalysis depends on Asp573, which acts as the Proton donor. Asn574, Asn610, and Asn744 each carry an N-linked (GlcNAc...) asparagine glycan.

Belongs to the glycosyl hydrolase 31 family.

The protein localises to the secreted. The enzyme catalyses Hydrolysis of terminal, non-reducing (1-&gt;4)-linked alpha-D-glucose residues with release of alpha-D-glucose.. The catalysed reaction is Hydrolysis of terminal, non-reducing beta-D-glucosyl residues with release of beta-D-glucose.. Functionally, glucosidase involved in the degradation of cellulosic biomass. Has both alpha- and beta-glucosidase activity. The sequence is that of Probable alpha/beta-glucosidase agdC (agdC) from Aspergillus flavus (strain ATCC 200026 / FGSC A1120 / IAM 13836 / NRRL 3357 / JCM 12722 / SRRC 167).